A 209-amino-acid chain; its full sequence is Claudin-4 (209 aa).

The Cytoplasmic segment spans residues 1-7 (MASMGLQ). Residues 1–103 (MASMGLQVMG…GVLLSVVGGK (103 aa)) are interaction with EPHA2. A helical transmembrane segment spans residues 8–28 (VMGIALAVLGWLAVMLCCALP). The Extracellular portion of the chain corresponds to 29–81 (MWRVTAFIGSNIVTSQTIWEGLWMNCVVQSTGQMQCKVYDSLLALPQDLQAAR). A disulfide bond links C54 and C64. A helical transmembrane segment spans residues 82–102 (ALVIISIIVAALGVLLSVVGG). The Cytoplasmic segment spans residues 103 to 117 (KCTNCLEDESAKAKT). Residues 118–138 (MIVAGVVFLLAGLMVIVPVSW) form a helical membrane-spanning segment. Residues 139 to 160 (TAHNIIQDFYNPLVASGQKREM) lie on the Extracellular side of the membrane. A helical membrane pass occupies residues 161–181 (GASLYVGWAASGLLLLGGGLL). The Cytoplasmic portion of the chain corresponds to 182–209 (CCNCPPRTDKPYSAKYSAARSAAASNYV). Y208 bears the Phosphotyrosine; by EPHA2 mark. Positions 208 to 209 (YV) are interactions with TJP1, TJP2 and TJP3.

It belongs to the claudin family. As to quaternary structure, can form heteropolymeric strands with other claudins. Interacts with CLDN8. Interacts with CLDN1. Directly interacts with TJP1/ZO-1. Interacts with TJP2/ZO-2 and TJP3/ZO-3. Interacts with EPHA2; phosphorylates CLDN4 and may regulate tight junctions. In terms of assembly, (Microbial infection) Interacts (via both extracellular domains) with Clostridium perfringens enterotoxin CPE; the interaction may disrupt claudin assembly in tight junctions. Phosphorylated. Phosphorylation by EPHA2 is stimulated by EFNA1 and alters interaction with TJP1.

It localises to the cell junction. The protein resides in the tight junction. The protein localises to the cell membrane. The catalysed reaction is chloride(in) = chloride(out). It carries out the reaction bromide(in) = bromide(out). It catalyses the reaction iodide(out) = iodide(in). The enzyme catalyses fluoride(in) = fluoride(out). Functionally, can associate with other claudins to regulate tight junction structural and functional strand dynamics. May coassemble with CLDN8 into tight junction strands containing anion-selective channels that convey paracellular chloride permeability in renal collecting ducts. May integrate into CLDN3 strands to modulate localized tight junction barrier properties. May disrupt strand assembly of channel-forming CLDN2 and CLDN15 and inhibit cation conductance. Cannot form tight junction strands on its own. The chain is Claudin-4 from Homo sapiens (Human).